The chain runs to 647 residues: Zinc finger protein 567 (647 aa).

A KRAB domain is found at 32-77 (MDVMLENYCHLISVGCHMTKPDVILKLERGEEPWTSFKGHTCLEEN). Glycyl lysine isopeptide (Lys-Gly) (interchain with G-Cter in SUMO2) cross-links involve residues Lys-173, Lys-202, and Lys-217. The segment at 210–232 (FEYNDCEKAFLKRGGPVTHSRTY) adopts a C2H2-type 1; degenerate zinc-finger fold. C2H2-type zinc fingers lie at residues 253-275 (HTCT…QGIH), 281-303 (YQCH…QRTH), 309-331 (FVCN…QRTH), 337-359 (YECP…QRTH), 365-387 (YECS…QRIH), 393-415 (YICK…QRTH), and 421-443 (YICN…EKTH). Lys-447 is covalently cross-linked (Glycyl lysine isopeptide (Lys-Gly) (interchain with G-Cter in SUMO2)). 7 consecutive C2H2-type zinc fingers follow at residues 449–471 (YICN…QRTH), 477–499 (YECP…HRTH), 505–527 (YECN…QRIH), 533–555 (YICN…QKIH), 561–583 (YECP…QRTH), 589–611 (YKCS…QRTH), and 617–639 (YICN…QRTH).

The protein belongs to the krueppel C2H2-type zinc-finger protein family.

It localises to the nucleus. Functionally, may be involved in transcriptional regulation. In Bos taurus (Bovine), this protein is Zinc finger protein 567 (ZNF567).